A 432-amino-acid chain; its full sequence is MMFKKCLSVLFTCLIFISSARAQLVIEITSGADQLLPIAVVPFGYEGVDALPEDIAQIVEADLARSGLFQPIPRSNMLSMPSKEADVFYRDWRLLKSDYVVIGAIKKLPNNQYRIGFELLNVLSQKPVQKHSSIDVSARNFRDAAHYISDKVYELLTGTRGAFSTRILYVTAEGDKKAPLFKLQVADADGHRPQVVVESKEPILSPSWSMDGRKIAYVMFRNRRPNIFIQELATGKRQQIAQFRGLNGAPAWSPDGKKLALVLSKDNNPEIYTLDIATQKLERMTNHYAIDTEPSWEPDGKGIVFTSDRGGNPQIYRLDVNSKRVERVTFEGDLNTRARMTPDGRYLVTVQKNDGNYHIALQDMKTGRVQILTETYLDESPSIAPNGSMVMYATTYQGKGILAVVSVDGLVKYRLPSADGDVREPSWSPYFK.

An N-terminal signal peptide occupies residues 1 to 22 (MMFKKCLSVLFTCLIFISSARA).

The protein belongs to the TolB family. In terms of assembly, the Tol-Pal system is composed of five core proteins: the inner membrane proteins TolA, TolQ and TolR, the periplasmic protein TolB and the outer membrane protein Pal. They form a network linking the inner and outer membranes and the peptidoglycan layer.

It localises to the periplasm. In terms of biological role, part of the Tol-Pal system, which plays a role in outer membrane invagination during cell division and is important for maintaining outer membrane integrity. The sequence is that of Tol-Pal system protein TolB from Marinomonas sp. (strain MWYL1).